The sequence spans 576 residues: MYRTHTCGELRGTDEGKNVILSGWIERIRDLGGVKFIVLRDRYGKTQVVVNPDSPVYPIVNNISREYVIQVEGIVRKRPAEAITPEPTGEIEIVASELKILSKSELPPFYPGDDVSEEMRLKYRYLDIRNPKMMNNLILRHKLAFATREYLSNNNFLEVETPYLTKSTPEGARDFLVPSRLKKGNFYALPQSPQLFKQILMISGIDRYFQIVRCFRDEDLRADRQPEFTQIDIEMSFVHMEDVINLAENLIRYIYKAIGIELPEKFDRITYEEAMEKYGSDKPDRRYGMEMVDLTEFFKNSDFKIIKEVLERGGSVKGFKANIPMSRKIADEYSEFVKGFGLGGVLWFKLENGQITSTTAKYLENEYKAIAEKYNMNEGEVFIIAAHDNRERMNEALGALRLKVGKQYVKVSGFDALWVVDFPFLEWSEEEGRFVARHHPFTMPYIEDLEGGVELSKVRAHAYDMVINGFEVGGGSIRIHRRDIQEKVFDIIGLTKEEAKEKFGFFLDALQYGVPPHGGIAFGLDRLAAIAAGVDNIREVIAFPKTSSGTCLLTNAPSAVTQFQLDELGIALKQSQ.

L-aspartate is bound at residue Glu170. The tract at residues 194–197 is aspartate; the sequence is QLFK. Residue Arg216 coordinates L-aspartate. ATP-binding positions include 216–218 and Gln225; that span reads RDE. Residue His438 participates in L-aspartate binding. Glu471 serves as a coordination point for ATP. Residue Arg478 coordinates L-aspartate. 523–526 serves as a coordination point for ATP; the sequence is GLDR.

The protein belongs to the class-II aminoacyl-tRNA synthetase family. Type 1 subfamily. Homodimer.

The protein resides in the cytoplasm. It catalyses the reaction tRNA(Asp) + L-aspartate + ATP = L-aspartyl-tRNA(Asp) + AMP + diphosphate. In terms of biological role, catalyzes the attachment of L-aspartate to tRNA(Asp) in a two-step reaction: L-aspartate is first activated by ATP to form Asp-AMP and then transferred to the acceptor end of tRNA(Asp). This is Aspartate--tRNA ligase from Fervidobacterium nodosum (strain ATCC 35602 / DSM 5306 / Rt17-B1).